The sequence spans 427 residues: Gamma-glutamyl phosphate reductase (427 aa).

The protein belongs to the gamma-glutamyl phosphate reductase family.

It localises to the cytoplasm. The enzyme catalyses L-glutamate 5-semialdehyde + phosphate + NADP(+) = L-glutamyl 5-phosphate + NADPH + H(+). It functions in the pathway amino-acid biosynthesis; L-proline biosynthesis; L-glutamate 5-semialdehyde from L-glutamate: step 2/2. Functionally, catalyzes the NADPH-dependent reduction of L-glutamate 5-phosphate into L-glutamate 5-semialdehyde and phosphate. The product spontaneously undergoes cyclization to form 1-pyrroline-5-carboxylate. The sequence is that of Gamma-glutamyl phosphate reductase from Gluconobacter oxydans (strain 621H) (Gluconobacter suboxydans).